The sequence spans 1099 residues: Protein transport protein Sec24A (1099 aa).

Disordered regions lie at residues 1 to 36, 65 to 139, and 279 to 317; these read MSQPGIPASGGSSTGLQAQNGAASASGSPYTNGPVQ, KTLN…LPGA, and SQPTTKNPTMSRSVGYSYPSLPPGYQNTAPPSTTGAGLP. 5 stretches are compositionally biased toward polar residues: residues 10-20, 68-90, 108-126, 279-292, and 303-317; these read GGSSTGLQAQN, NPVSGQSNSGGSQTVSPLSNYQG, SLHSGPSPQMPLPTSQNPA, SQPTTKNPTMSRSV, and YQNTAPPSTTGAGLP. The Zn(2+) site is built by C437, C440, C458, and C461. A zinc finger-like region spans residues 437-461; sequence CRSCRTYINPFVSFLDQRRWKCNLC. A Gelsolin-like repeat occupies 972–1044; it reads PQPPILQLSV…TPESARTIAF (73 aa).

The protein belongs to the SEC23/SEC24 family. SEC24 subfamily. In terms of assembly, COPII is composed of at least five proteins: the Sec23/24 complex, the Sec13/31 complex and Sar1. Interacts with TMED2. Interacts (as part of the Sec23/24 complex) with SEC22B; recruits SEC22B into COPII-coated vesicles for its transport from the endoplasmic reticulum to the Golgi. Interacts with STING1; promoting STING1 translocation to COPII vesicles in a STEEP1-dependent manner. Interacts with TMEM39A. Interacts with SACM1L; this interaction is reduced in the absence of TMEM39A. Interacts with kinase FAM20C; transport of FAM20C from the endoplasmic reticulum to the Golgi is likely to be mediated by COPII vesicles.

The protein resides in the cytoplasmic vesicle. It localises to the COPII-coated vesicle membrane. It is found in the endoplasmic reticulum membrane. Its subcellular location is the cytoplasm. The protein localises to the cytosol. In terms of biological role, component of the coat protein complex II (COPII) which promotes the formation of transport vesicles from the endoplasmic reticulum (ER). The coat has two main functions, the physical deformation of the endoplasmic reticulum membrane into vesicles and the selection of cargo molecules for their transport to the Golgi complex. Plays a central role in cargo selection within the COPII complex and together with SEC24B may have a different specificity compared to SEC24C and SEC24D. May package preferentially cargos with cytoplasmic DxE or LxxLE motifs and may also recognize conformational epitopes. The protein is Protein transport protein Sec24A of Bos taurus (Bovine).